Consider the following 317-residue polypeptide: Porphobilinogen deaminase (317 aa).

The residue at position 245 (Cys-245) is an S-(dipyrrolylmethanemethyl)cysteine.

It belongs to the HMBS family. In terms of assembly, monomer. Dipyrromethane is required as a cofactor.

It catalyses the reaction 4 porphobilinogen + H2O = hydroxymethylbilane + 4 NH4(+). It functions in the pathway porphyrin-containing compound metabolism; protoporphyrin-IX biosynthesis; coproporphyrinogen-III from 5-aminolevulinate: step 2/4. The protein operates within porphyrin-containing compound metabolism; chlorophyll biosynthesis. Its function is as follows. Tetrapolymerization of the monopyrrole PBG into the hydroxymethylbilane pre-uroporphyrinogen in several discrete steps. The chain is Porphobilinogen deaminase from Prochlorococcus marinus (strain MIT 9313).